Here is a 339-residue protein sequence, read N- to C-terminus: Cytochrome c biogenesis protein CcsA (339 aa).

Transmembrane regions (helical) follow at residues 6 to 26, 37 to 57, 71 to 91, 97 to 117, 142 to 162, 247 to 267, and 281 to 299; these read LEHILAHISFFLPFLATLVFW, IGSLGNKSIIIAYICITGLLL, LYESFMFLSWSFCLIHIVSEI, WLGIIIVLIAMLTHGFATVGL, MMIPSYATLPCGSLLVIALLI, IISLGSLFLTIGILSGAVWVN, and TWALITWLLSAIHIHIRMI.

This sequence belongs to the CcmF/CycK/Ccl1/NrfE/CcsA family. May interact with Ccs1.

It localises to the plastid. Its subcellular location is the chloroplast thylakoid membrane. Required during biogenesis of c-type cytochromes (cytochrome c6 and cytochrome f) at the step of heme attachment. The protein is Cytochrome c biogenesis protein CcsA of Anthoceros angustus (Hornwort).